Consider the following 281-residue polypeptide: MITSAHIDDIRTQVRAWRAQGETVAFVPTMGNLHQGHITLVKEAAKKCDHVVVSIFVNPMQFGQNEDLDAYPRTLEADSQALTVAGAELLFTPTPAIIYPKGLAQQTYVEVPGISDVLCGASRPGHFRGVATIVCKLFNIVLPDVAFFGNKDYQQLLVIRTMVEDLSLPIEIIGVDTIREASGLAMSSRNGYLTEEEKAAAPALKKAIDAMAQGIKQGVSIEQVTEEAKASLIAAGFTPDYLEVRHATTLANAEPQDQALVILAAAYLGKARLIDNLRFDR.

30–37 lines the ATP pocket; the sequence is MGNLHQGH. Histidine 37 serves as the catalytic Proton donor. Glutamine 61 contributes to the (R)-pantoate binding site. Glutamine 61 contributes to the beta-alanine binding site. 149-152 lines the ATP pocket; sequence GNKD. Glutamine 155 is a binding site for (R)-pantoate. Residues isoleucine 178 and 186 to 189 each bind ATP; that span reads MSSR.

The protein belongs to the pantothenate synthetase family. As to quaternary structure, homodimer.

The protein resides in the cytoplasm. The enzyme catalyses (R)-pantoate + beta-alanine + ATP = (R)-pantothenate + AMP + diphosphate + H(+). It participates in cofactor biosynthesis; (R)-pantothenate biosynthesis; (R)-pantothenate from (R)-pantoate and beta-alanine: step 1/1. In terms of biological role, catalyzes the condensation of pantoate with beta-alanine in an ATP-dependent reaction via a pantoyl-adenylate intermediate. In Shewanella sp. (strain MR-7), this protein is Pantothenate synthetase.